A 281-amino-acid chain; its full sequence is 3-methyl-2-oxobutanoate hydroxymethyltransferase (281 aa).

D44 and D83 together coordinate Mg(2+). 3-methyl-2-oxobutanoate-binding positions include 44-45, D83, and K112; that span reads DS. E114 is a binding site for Mg(2+). The active-site Proton acceptor is E180. Residues 251–281 are disordered; sequence RNGTFPGPEHSSRMDPAELAAALGSQDQATE.

This sequence belongs to the PanB family. In terms of assembly, homodecamer; pentamer of dimers. The cofactor is Mg(2+).

It is found in the cytoplasm. It carries out the reaction 3-methyl-2-oxobutanoate + (6R)-5,10-methylene-5,6,7,8-tetrahydrofolate + H2O = 2-dehydropantoate + (6S)-5,6,7,8-tetrahydrofolate. It functions in the pathway cofactor biosynthesis; (R)-pantothenate biosynthesis; (R)-pantoate from 3-methyl-2-oxobutanoate: step 1/2. Functionally, catalyzes the reversible reaction in which hydroxymethyl group from 5,10-methylenetetrahydrofolate is transferred onto alpha-ketoisovalerate to form ketopantoate. The protein is 3-methyl-2-oxobutanoate hydroxymethyltransferase of Chloroflexus aurantiacus (strain ATCC 29364 / DSM 637 / Y-400-fl).